The following is a 312-amino-acid chain: Phospholipid phosphatase 3 (312 aa).

Topologically, residues 1 to 33 (MQSYKYDKAIVPESKNGGSPALNNNPRKGGSKR) are cytoplasmic. Ser-19 is modified (phosphoserine). A helical transmembrane segment spans residues 34 to 54 (VLLICLDLFCLFMAALPFLII). The Extracellular portion of the chain corresponds to 55 to 85 (ETSTIKPYRRGFYCNDESIKYPLKVSETIND). The helical transmembrane segment at 86–106 (AVLCAVGIVIAILAIITGEFY) threads the bilayer. Residues 107-123 (RIYYLKEKSRSTTQNPY) are Cytoplasmic-facing. The short motif at 109 to 110 (YY) is the Dityrosine basolateral targeting motif element. A helical transmembrane segment spans residues 124–144 (VAALYKQVGCFLFGCAISQSF). Topologically, residues 145–194 (TDIAKVSIGRLRPHFLSVCDPDFSQINCSEGYIQNYRCRGEDSKVQEARK) are extracellular. The tract at residues 149-157 (KVSIGRLRP) is phosphatase sequence motif I. N-linked (GlcNAc...) asparagine glycosylation occurs at Asn-171. Residues 183-185 (RGE) carry the Integrin-binding motif motif. The helical transmembrane segment at 195–215 (SFFSGHASFSMFTMLYLVLYL) threads the bilayer. The segment at 197 to 200 (FSGH) is phosphatase sequence motif II. His-200 functions as the Proton donors in the catalytic mechanism. The Cytoplasmic portion of the chain corresponds to 216 to 226 (QARFTWRGARL). A helical membrane pass occupies residues 227 to 244 (LRPLLQFTLLMMAFYTGL). The tract at residues 245–256 (SRVSDYKHHPSD) is phosphatase sequence motif III. The Extracellular segment spans residues 245–258 (SRVSDYKHHPSDVL). The Nucleophile role is filled by His-252. A helical membrane pass occupies residues 259-279 (AGFAQGALVACCIVFFVSDLF). A mediates interaction with CTNND1 region spans residues 276 to 312 (SDLFKTKTSLSLPAPAIRREILSPVDIIDRNNHHNMV). Residues 280 to 312 (KTKTSLSLPAPAIRREILSPVDIIDRNNHHNMV) are Cytoplasmic-facing.

It belongs to the PA-phosphatase related phosphoesterase family. In terms of assembly, forms functional homodimers and homooligomers that are not required for substrate recognition and catalytic activity. Can also form heterooligomers with other PLPP2 and PLPP3. Interacts with CTNND1; negatively regulates the PLPP3-mediated stabilization of beta-catenin/CTNNB1. In terms of processing, N-glycosylated. Contains high-mannose oligosaccharides. In terms of tissue distribution, detected in lung, cerebellum and heart atrium.

It localises to the cell membrane. Its subcellular location is the basolateral cell membrane. It is found in the endoplasmic reticulum membrane. The protein resides in the endoplasmic reticulum-Golgi intermediate compartment membrane. The protein localises to the golgi apparatus membrane. It localises to the golgi apparatus. Its subcellular location is the trans-Golgi network membrane. It is found in the membrane raft. The catalysed reaction is a 1,2-diacyl-sn-glycero-3-phosphate + H2O = a 1,2-diacyl-sn-glycerol + phosphate. It carries out the reaction 1,2-dihexadecanoyl-sn-glycero-3-phosphate + H2O = 1,2-dihexadecanoyl-sn-glycerol + phosphate. It catalyses the reaction 1,2-di-(9Z-octadecenoyl)-sn-glycero-3-phosphate + H2O = 1,2-di-(9Z-octadecenoyl)-sn-glycerol + phosphate. The enzyme catalyses a monoacyl-sn-glycero-3-phosphate + H2O = a monoacylglycerol + phosphate. The catalysed reaction is (9Z)-octadecenoyl-sn-glycero-3-phosphate + H2O = (9Z-octadecenoyl)-glycerol + phosphate. It carries out the reaction sphing-4-enine 1-phosphate + H2O = sphing-4-enine + phosphate. It catalyses the reaction an N-acylsphing-4-enine 1-phosphate + H2O = an N-acylsphing-4-enine + phosphate. The enzyme catalyses N-(octanoyl)-sphing-4-enine-1-phosphate + H2O = N-octanoylsphing-4-enine + phosphate. The catalysed reaction is N-(9Z-octadecenoyl)-ethanolamine phosphate + H2O = N-(9Z-octadecenoyl) ethanolamine + phosphate. The protein operates within lipid metabolism; phospholipid metabolism. Magnesium-independent phospholipid phosphatase. Insensitive to N-ethylmaleimide. Magnesium-independent phospholipid phosphatase of the plasma membrane that catalyzes the dephosphorylation of a variety of glycerolipid and sphingolipid phosphate esters including phosphatidate/PA, lysophosphatidate/LPA, diacylglycerol pyrophosphate/DGPP, sphingosine 1-phosphate/S1P and ceramide 1-phosphate/C1P. Also acts on N-oleoyl ethanolamine phosphate/N-(9Z-octadecenoyl)-ethanolamine phosphate, a potential physiological compound. Has both an extracellular and an intracellular phosphatase activity, allowing the hydrolysis and the cellular uptake of these bioactive lipid mediators from the milieu, regulating signal transduction in different cellular processes. Through the dephosphorylation of extracellular sphingosine-1-phosphate and the regulation of its extra- and intracellular availability, plays a role in vascular homeostasis, regulating endothelial cell migration, adhesion, survival, proliferation and the production of pro-inflammatory cytokines. By maintaining the appropriate levels of this lipid in the cerebellum, also ensure its proper development and function. Through its intracellular lipid phosphatase activity may act in early compartments of the secretory pathway, regulating the formation of Golgi to endoplasmic reticulum retrograde transport carriers. In terms of biological role, independently of this phosphatase activity may also function in the Wnt signaling pathway and the stabilization of beta-catenin/CTNNB1, thereby regulating cell proliferation, migration and differentiation in angiogenesis or yet in tumor growth. Also plays a role in integrin-mediated cell-cell adhesion in angiogenesis. The polypeptide is Phospholipid phosphatase 3 (Mus musculus (Mouse)).